The chain runs to 490 residues: Thyroid hormone receptor alpha (490 aa).

Positions Met-1–Gln-32 are disordered. The segment at Met-1 to Gln-52 is modulating. Positions 53, 56, 70, 73, 91, 97, 107, and 110 each coordinate Zn(2+). NR C4-type zinc fingers lie at residues Cys-53–Cys-73 and Cys-91–Cys-115. Positions Cys-53–Asp-127 form a DNA-binding region, nuclear receptor. The NR LBD domain maps to Glu-163–Val-407. Positions 228 and 277 each coordinate 3,3',5-triiodo-L-thyronine. The interval Ala-457–Pro-490 is disordered.

It belongs to the nuclear hormone receptor family. NR1 subfamily. As to quaternary structure, binds DNA as a dimer; homodimer and heterodimer with RXRB. Interacts with NCOA3 and NCOA6 coactivators, leading to a strong increase of transcription of target genes. Probably interacts with SFPQ. Interacts with C1D. Interacts with AKAP13. Interacts with TP53INP2. Interacts with PER2. Isoform alpha-2 and isoform alpha-1 interact with TACC1, but the interaction with alpha-1 is weaker. The interaction with isoform alpha-1, but not alpha-2, is decreased in the presence of thyroid hormone T3.

The protein localises to the nucleus. It is found in the cytoplasm. Functionally, nuclear hormone receptor that can act as a repressor or activator of transcription. High affinity receptor for thyroid hormones, including triiodothyronine and thyroxine. Does not bind thyroid hormone and functions as a weak dominant negative inhibitor of thyroid hormone action. This chain is Thyroid hormone receptor alpha (THRA), found in Homo sapiens (Human).